Consider the following 206-residue polypeptide: MNHKTGAILVLSGPSGAGKSSLIKEVIDDIGECYFSISTTTRPIREGEVDGVHYHFVSESEFKKDIEDEFFLEYAVVHSNYYGTSIKPVKKALKSGKLVIFDIDVQGNATIINRLGDITTSVFISPPTLSELKKRLEARSTDTKDVIERRIEMAKREMQRVSEYDFLIVNDNLQEAAKTLRIIADAARVKIPSNEINDFVRSWEDI.

In terms of domain architecture, Guanylate kinase-like spans 6–185 (GAILVLSGPS…AAKTLRIIAD (180 aa)). 13-20 (GPSGAGKS) provides a ligand contact to ATP.

Belongs to the guanylate kinase family.

It is found in the cytoplasm. The enzyme catalyses GMP + ATP = GDP + ADP. Its function is as follows. Essential for recycling GMP and indirectly, cGMP. The protein is Guanylate kinase of Sulfurimonas denitrificans (strain ATCC 33889 / DSM 1251) (Thiomicrospira denitrificans (strain ATCC 33889 / DSM 1251)).